The chain runs to 282 residues: 2-dehydro-3-deoxyphosphooctonate aldolase (282 aa).

It belongs to the KdsA family.

It localises to the cytoplasm. It carries out the reaction D-arabinose 5-phosphate + phosphoenolpyruvate + H2O = 3-deoxy-alpha-D-manno-2-octulosonate-8-phosphate + phosphate. The protein operates within carbohydrate biosynthesis; 3-deoxy-D-manno-octulosonate biosynthesis; 3-deoxy-D-manno-octulosonate from D-ribulose 5-phosphate: step 2/3. It functions in the pathway bacterial outer membrane biogenesis; lipopolysaccharide biosynthesis. The protein is 2-dehydro-3-deoxyphosphooctonate aldolase of Shewanella woodyi (strain ATCC 51908 / MS32).